The sequence spans 147 residues: Ribosome maturation factor RimP (147 aa).

The protein belongs to the RimP family.

The protein localises to the cytoplasm. Its function is as follows. Required for maturation of 30S ribosomal subunits. The protein is Ribosome maturation factor RimP of Sulfurihydrogenibium azorense (strain DSM 15241 / OCM 825 / Az-Fu1).